We begin with the raw amino-acid sequence, 594 residues long: UvrABC system protein C (594 aa).

Residues 14 to 91 (DSPGCYLHKD…IQENMPKYNI (78 aa)) enclose the GIY-YIG domain. Residues 196-231 (DKIIDDLRSKMLEASHNQEFERAAEYRDLISGIATM) enclose the UVR domain.

Belongs to the UvrC family. Interacts with UvrB in an incision complex.

Its subcellular location is the cytoplasm. The UvrABC repair system catalyzes the recognition and processing of DNA lesions. UvrC both incises the 5' and 3' sides of the lesion. The N-terminal half is responsible for the 3' incision and the C-terminal half is responsible for the 5' incision. In Streptococcus equi subsp. equi (strain 4047), this protein is UvrABC system protein C.